The sequence spans 828 residues: Periplasmic nitrate reductase (828 aa).

Positions 1–31 form a signal peptide, tat-type signal; the sequence is MKLSRRSFMKANAVAAAAAAAGLSVPGVARA. The region spanning 39–95 is the 4Fe-4S Mo/W bis-MGD-type domain; sequence IKWDKAPCRFCGTGCGVLVGTQQGRVVACQGDPDAPVNRGLNCIKGYFLPKIMYGKD. Positions 46, 49, 53, and 81 each coordinate [4Fe-4S] cluster. Mo-bis(molybdopterin guanine dinucleotide) contacts are provided by residues Lys-83, Gln-150, Asn-175, Cys-179, 212–219, 243–247, 262–264, Met-372, Gln-376, Asn-482, 508–509, Lys-531, Asp-558, and 718–727; these read WGSNMAEM, STYQH, QSD, SD, and TGRVLEHWHT. Substrate is bound at residue Phe-794. Asn-802 and Lys-819 together coordinate Mo-bis(molybdopterin guanine dinucleotide).

It belongs to the prokaryotic molybdopterin-containing oxidoreductase family. NasA/NapA/NarB subfamily. In terms of assembly, component of the periplasmic nitrate reductase NapAB complex composed of NapA and NapB. The cofactor is [4Fe-4S] cluster. Requires Mo-bis(molybdopterin guanine dinucleotide) as cofactor. In terms of processing, predicted to be exported by the Tat system. The position of the signal peptide cleavage has not been experimentally proven.

The protein localises to the periplasm. It carries out the reaction 2 Fe(II)-[cytochrome] + nitrate + 2 H(+) = 2 Fe(III)-[cytochrome] + nitrite + H2O. Catalytic subunit of the periplasmic nitrate reductase complex NapAB. Receives electrons from NapB and catalyzes the reduction of nitrate to nitrite. This is Periplasmic nitrate reductase from Escherichia coli O1:K1 / APEC.